The primary structure comprises 356 residues: Riboflavin biosynthesis protein RibD (356 aa).

Residues 1–148 (MIREIDKNYM…EDFFTYITQE (148 aa)) are deaminase. Residues 4–126 (EIDKNYMKLA…KLRNAGIEVD (123 aa)) form the CMP/dCMP-type deaminase domain. Histidine 53 serves as a coordination point for Zn(2+). Catalysis depends on glutamate 55, which acts as the Proton donor. Cysteine 78 and cysteine 87 together coordinate Zn(2+). A reductase region spans residues 149–356 (RPYITLKWAQ…EDLVIFFKRY (208 aa)). Alanine 157 lines the NADP(+) pocket. Residue serine 171 coordinates substrate. Tryptophan 173 contributes to the NADP(+) binding site. Arginine 187 is a binding site for substrate. Threonine 199 and aspartate 203 together coordinate NADP(+). 3 residues coordinate substrate: leucine 207, arginine 210, and glutamate 290. 292 to 298 (GPRTLTS) contacts NADP(+).

The protein in the N-terminal section; belongs to the cytidine and deoxycytidylate deaminase family. In the C-terminal section; belongs to the HTP reductase family. Zn(2+) serves as cofactor.

The enzyme catalyses 2,5-diamino-6-hydroxy-4-(5-phosphoribosylamino)-pyrimidine + H2O + H(+) = 5-amino-6-(5-phospho-D-ribosylamino)uracil + NH4(+). The catalysed reaction is 5-amino-6-(5-phospho-D-ribitylamino)uracil + NADP(+) = 5-amino-6-(5-phospho-D-ribosylamino)uracil + NADPH + H(+). Its pathway is cofactor biosynthesis; riboflavin biosynthesis; 5-amino-6-(D-ribitylamino)uracil from GTP: step 2/4. It functions in the pathway cofactor biosynthesis; riboflavin biosynthesis; 5-amino-6-(D-ribitylamino)uracil from GTP: step 3/4. Functionally, converts 2,5-diamino-6-(ribosylamino)-4(3h)-pyrimidinone 5'-phosphate into 5-amino-6-(ribosylamino)-2,4(1h,3h)-pyrimidinedione 5'-phosphate. This Aquifex aeolicus (strain VF5) protein is Riboflavin biosynthesis protein RibD (ribD).